We begin with the raw amino-acid sequence, 334 residues long: Nucleoid-associated protein PMI0825 (334 aa).

This sequence belongs to the YejK family.

It is found in the cytoplasm. The protein localises to the nucleoid. This Proteus mirabilis (strain HI4320) protein is Nucleoid-associated protein PMI0825.